Reading from the N-terminus, the 259-residue chain is 3-deoxy-manno-octulosonate cytidylyltransferase (259 aa).

It belongs to the KdsB family.

It localises to the cytoplasm. The catalysed reaction is 3-deoxy-alpha-D-manno-oct-2-ulosonate + CTP = CMP-3-deoxy-beta-D-manno-octulosonate + diphosphate. Its pathway is nucleotide-sugar biosynthesis; CMP-3-deoxy-D-manno-octulosonate biosynthesis; CMP-3-deoxy-D-manno-octulosonate from 3-deoxy-D-manno-octulosonate and CTP: step 1/1. The protein operates within bacterial outer membrane biogenesis; lipopolysaccharide biosynthesis. Activates KDO (a required 8-carbon sugar) for incorporation into bacterial lipopolysaccharide in Gram-negative bacteria. This chain is 3-deoxy-manno-octulosonate cytidylyltransferase, found in Xanthomonas euvesicatoria pv. vesicatoria (strain 85-10) (Xanthomonas campestris pv. vesicatoria).